The primary structure comprises 292 residues: MPQHDQLHRYLFENFAVRGELVTVSETLQQILDNHTYPQPVKTVLAELLVATSLLTATLKFAGDITVQLQGDGPLSLAVINGNNQQQMRGVARVQGDIPDNADLKTLVGNGYLVITITPEEGERYQGVVGLEGDTLAACLEDYFLRSEQLPTRLFIRTGDVDGKPAAGGMLLQVMPAQNAQAEDFDHLAMLTETIKSEELLTLPANDVLWRLYHEEEVTLYDPQDVEFKCTCSRERCAGALKTLPDEEVDSILAEEGEIDMHCDYCGNHYLFNAMDIAEIRNNASPADPQVH.

2 disulfides stabilise this stretch: Cys230-Cys232 and Cys263-Cys266.

Belongs to the HSP33 family. Under oxidizing conditions two disulfide bonds are formed involving the reactive cysteines. Under reducing conditions zinc is bound to the reactive cysteines and the protein is inactive.

The protein resides in the cytoplasm. In terms of biological role, redox regulated molecular chaperone. Protects both thermally unfolding and oxidatively damaged proteins from irreversible aggregation. Plays an important role in the bacterial defense system toward oxidative stress. In Salmonella paratyphi A (strain ATCC 9150 / SARB42), this protein is 33 kDa chaperonin.